A 381-amino-acid polypeptide reads, in one-letter code: N-acetyl-alpha-D-glucosaminyl L-malate synthase (381 aa).

(S)-malate contacts are provided by serine 16, tyrosine 94, and threonine 122. The UDP site is built by asparagine 206, glutamine 262, and glutamate 290.

It belongs to the glycosyltransferase group 1 family. Glycosyltransferase 4 subfamily. Dimer of tetramers.

It carries out the reaction (S)-malate + UDP-N-acetyl-alpha-D-glucosamine = (S)-malyl N-acetyl-alpha-D-glucosaminide + UDP + H(+). Involved in bacillithiol (BSH) biosynthesis. Catalyzes the first step of the pathway, the formation of N-acetylglucosaminylmalate (GlcNAc-Mal) from UDP-N-acetylglucosamine (UDP-GlcNAc) and L-malate. This chain is N-acetyl-alpha-D-glucosaminyl L-malate synthase, found in Bacillus anthracis.